We begin with the raw amino-acid sequence, 332 residues long: Adenosine deaminase (332 aa).

The Zn(2+) site is built by His12 and His14. Substrate contacts are provided by His14, Asp16, and Gly170. Residue His197 participates in Zn(2+) binding. The Proton donor role is filled by Glu200. Asp278 is a binding site for Zn(2+).

This sequence belongs to the metallo-dependent hydrolases superfamily. Adenosine and AMP deaminases family. Adenosine deaminase subfamily. It depends on Zn(2+) as a cofactor.

The catalysed reaction is adenosine + H2O + H(+) = inosine + NH4(+). The enzyme catalyses 2'-deoxyadenosine + H2O + H(+) = 2'-deoxyinosine + NH4(+). Its function is as follows. Catalyzes the hydrolytic deamination of adenosine and 2-deoxyadenosine. The chain is Adenosine deaminase from Clostridium perfringens (strain 13 / Type A).